A 276-amino-acid chain; its full sequence is Large ribosomal subunit protein uL2 (276 aa).

2 disordered regions span residues 1-20 (MGIKKYNPTTNGRRNMTTND) and 219-276 (TVRG…RRKK). Residues 7 to 20 (NPTTNGRRNMTTND) are compositionally biased toward polar residues.

Belongs to the universal ribosomal protein uL2 family. Part of the 50S ribosomal subunit. Forms a bridge to the 30S subunit in the 70S ribosome.

One of the primary rRNA binding proteins. Required for association of the 30S and 50S subunits to form the 70S ribosome, for tRNA binding and peptide bond formation. It has been suggested to have peptidyltransferase activity; this is somewhat controversial. Makes several contacts with the 16S rRNA in the 70S ribosome. The chain is Large ribosomal subunit protein uL2 from Bacillus anthracis (strain A0248).